The primary structure comprises 152 residues: Snaclec coagulation factor IX/factor X-binding protein subunit A (152 aa).

The N-terminal stretch at 1 to 23 (MGRFIFLSFGLLVVFLSLSGTGA) is a signal peptide. 3 cysteine pairs are disulfide-bonded: Cys-25-Cys-36, Cys-53-Cys-150, and Cys-125-Cys-142. The region spanning 32-151 (YEGHCYNIFH…CGERNPFVCE (120 aa)) is the C-type lectin domain. Ca(2+) contacts are provided by Ser-64, Glu-66, and Glu-70. Residue Glu-151 coordinates Ca(2+).

This sequence belongs to the snaclec family. In terms of assembly, heterodimer of subunits A and B; disulfide-linked. In terms of tissue distribution, expressed by the venom gland.

It localises to the secreted. Anticoagulant protein which binds to the gamma-carboxyglutamic acid-domain regions of factors IX (F9) and factor X (F10) in the presence of calcium with a 1 to 1 stoichiometry. This is Snaclec coagulation factor IX/factor X-binding protein subunit A from Gloydius halys (Chinese water mocassin).